A 256-amino-acid chain; its full sequence is Imidazole glycerol phosphate synthase subunit HisF (256 aa).

Residues aspartate 11 and aspartate 130 contribute to the active site.

Belongs to the HisA/HisF family. As to quaternary structure, heterodimer of HisH and HisF.

The protein resides in the cytoplasm. The enzyme catalyses 5-[(5-phospho-1-deoxy-D-ribulos-1-ylimino)methylamino]-1-(5-phospho-beta-D-ribosyl)imidazole-4-carboxamide + L-glutamine = D-erythro-1-(imidazol-4-yl)glycerol 3-phosphate + 5-amino-1-(5-phospho-beta-D-ribosyl)imidazole-4-carboxamide + L-glutamate + H(+). The protein operates within amino-acid biosynthesis; L-histidine biosynthesis; L-histidine from 5-phospho-alpha-D-ribose 1-diphosphate: step 5/9. Its function is as follows. IGPS catalyzes the conversion of PRFAR and glutamine to IGP, AICAR and glutamate. The HisF subunit catalyzes the cyclization activity that produces IGP and AICAR from PRFAR using the ammonia provided by the HisH subunit. The polypeptide is Imidazole glycerol phosphate synthase subunit HisF (Prochlorococcus marinus (strain NATL2A)).